A 1428-amino-acid chain; its full sequence is DNA polymerase III PolC-type (1428 aa).

Residues 414–570 (FVVFDVETTG…YDAEATGYLL (157 aa)) form the Exonuclease domain.

It belongs to the DNA polymerase type-C family. PolC subfamily.

The protein resides in the cytoplasm. The enzyme catalyses DNA(n) + a 2'-deoxyribonucleoside 5'-triphosphate = DNA(n+1) + diphosphate. In terms of biological role, required for replicative DNA synthesis. This DNA polymerase also exhibits 3' to 5' exonuclease activity. The chain is DNA polymerase III PolC-type from Oceanobacillus iheyensis (strain DSM 14371 / CIP 107618 / JCM 11309 / KCTC 3954 / HTE831).